Reading from the N-terminus, the 361-residue chain is Peptide chain release factor 1 (361 aa).

Gln-237 bears the N5-methylglutamine mark. Residues 285-296 show a composition bias toward basic and acidic residues; that stretch reads DEKRRSAEESTR. Residues 285 to 305 form a disordered region; sequence DEKRRSAEESTRRNLVSSGDR.

Belongs to the prokaryotic/mitochondrial release factor family. In terms of processing, methylated by PrmC. Methylation increases the termination efficiency of RF1.

The protein localises to the cytoplasm. In terms of biological role, peptide chain release factor 1 directs the termination of translation in response to the peptide chain termination codons UAG and UAA. The chain is Peptide chain release factor 1 from Shewanella halifaxensis (strain HAW-EB4).